Reading from the N-terminus, the 364-residue chain is MKYQGSPGFSHGQADKIGVLVTNLGTPEAPTKKALKPYLKEFLSDPRVVEVPRLLWFLILNGVILRFRPKRSAEAYKTVWTDRGSPLLFHTQDQASAIEAKLKQTWGDNIVVDFAMRYGNPALSEVVEKMMQKGVRKLLVLPLYPQYSASTTASTFDALAKDFTKRRWLPELRFITHYHDFSPFIEAAAQRIEKHWDAHGRADKLLFSYHGIPLRYLKNGDPYHCECYKTSRLLAERLGLGKDEYLTTFQSRFGREEWLQPYTDMTMKALPGKGVKSVQVFCPGFSSDCLETVEEIGEENREYFMESGGERYEYISALNAESGHIDALSQLIENNLQGWSVEDVTEQRQQRADQVKKQSLPYDD.

Positions 210 and 291 each coordinate Fe cation.

The protein belongs to the ferrochelatase family.

Its subcellular location is the cytoplasm. The enzyme catalyses heme b + 2 H(+) = protoporphyrin IX + Fe(2+). It participates in porphyrin-containing compound metabolism; protoheme biosynthesis; protoheme from protoporphyrin-IX: step 1/1. In terms of biological role, catalyzes the ferrous insertion into protoporphyrin IX. The polypeptide is Ferrochelatase (Idiomarina loihiensis (strain ATCC BAA-735 / DSM 15497 / L2-TR)).